The chain runs to 175 residues: Large ribosomal subunit protein uL10 (175 aa).

The protein belongs to the universal ribosomal protein uL10 family. As to quaternary structure, part of the ribosomal stalk of the 50S ribosomal subunit. The N-terminus interacts with L11 and the large rRNA to form the base of the stalk. The C-terminus forms an elongated spine to which L12 dimers bind in a sequential fashion forming a multimeric L10(L12)X complex.

Forms part of the ribosomal stalk, playing a central role in the interaction of the ribosome with GTP-bound translation factors. This is Large ribosomal subunit protein uL10 from Mycobacterium sp. (strain KMS).